Here is a 348-residue protein sequence, read N- to C-terminus: Bombesin receptor-activated protein C6orf89 homolog (348 aa).

The Cytoplasmic segment spans residues 1–58 (MDLAANEISIYDKLSETVDLVRQTGHQCGMSEKAIEKFIRQLLEKNEPQRGPPQYPLL). The chain crosses the membrane as a helical span at residues 59–79 (IAMYKVLLTLGLILFTAYFVI). At 80 to 348 (QPFSSLAPEP…ICDGTTLSEL (269 aa)) the chain is on the extracellular side.

Homodimer. Interacts with BRS3. Interacts (via N-terminus) with SIN3B. In terms of processing, glycosylated.

The protein localises to the golgi apparatus membrane. It is found in the cytoplasm. Its function is as follows. Exhibits histone deacetylase (HDAC) enhancer properties. May play a role in cell cycle progression and wound repair of bronchial epithelial cells. The protein is Bombesin receptor-activated protein C6orf89 homolog of Rattus norvegicus (Rat).